The primary structure comprises 284 residues: Ribosomal RNA small subunit methyltransferase A (284 aa).

The S-adenosyl-L-methionine site is built by asparagine 26, leucine 28, glycine 53, glutamate 74, aspartate 97, and asparagine 127.

It belongs to the class I-like SAM-binding methyltransferase superfamily. rRNA adenine N(6)-methyltransferase family. RsmA subfamily.

It is found in the cytoplasm. It carries out the reaction adenosine(1518)/adenosine(1519) in 16S rRNA + 4 S-adenosyl-L-methionine = N(6)-dimethyladenosine(1518)/N(6)-dimethyladenosine(1519) in 16S rRNA + 4 S-adenosyl-L-homocysteine + 4 H(+). Its function is as follows. Specifically dimethylates two adjacent adenosines (A1518 and A1519) in the loop of a conserved hairpin near the 3'-end of 16S rRNA in the 30S particle. May play a critical role in biogenesis of 30S subunits. This chain is Ribosomal RNA small subunit methyltransferase A, found in Anaeromyxobacter dehalogenans (strain 2CP-C).